A 307-amino-acid polypeptide reads, in one-letter code: Tyrosine recombinase XerC (307 aa).

One can recognise a Core-binding (CB) domain in the interval 6 to 89 (HNTLQTVNTF…TLRTFFRYLM (84 aa)). A Tyr recombinase domain is found at 110 to 293 (RLPKALDVDQ…DFQHLAQVYD (184 aa)). Catalysis depends on residues arginine 151, lysine 175, histidine 245, arginine 248, and histidine 271. The O-(3'-phospho-DNA)-tyrosine intermediate role is filled by tyrosine 280.

Belongs to the 'phage' integrase family. XerC subfamily. Forms a cyclic heterotetrameric complex composed of two molecules of XerC and two molecules of XerD.

The protein localises to the cytoplasm. Site-specific tyrosine recombinase, which acts by catalyzing the cutting and rejoining of the recombining DNA molecules. The XerC-XerD complex is essential to convert dimers of the bacterial chromosome into monomers to permit their segregation at cell division. It also contributes to the segregational stability of plasmids. In Alcanivorax borkumensis (strain ATCC 700651 / DSM 11573 / NCIMB 13689 / SK2), this protein is Tyrosine recombinase XerC.